Here is a 246-residue protein sequence, read N- to C-terminus: Glutamate/aspartate import permease protein GltJ (246 aa).

Residues 29–230 (FQVTIALSIC…LINAFIMLVM (202 aa)) form the ABC transmembrane type-1 domain. The next 5 membrane-spanning stretches (helical) occupy residues 33-53 (IALS…FGIL), 74-94 (NVPL…LLPE), 104-124 (LDPN…FTAA), 179-196 (LVKN…DMAA), and 212-232 (FTAI…VMTL).

It belongs to the binding-protein-dependent transport system permease family. HisMQ subfamily. As to quaternary structure, the complex is composed of two ATP-binding proteins (GltL), two transmembrane proteins (GltJ and GltK) and a solute-binding protein (GltI).

Its subcellular location is the cell inner membrane. In terms of biological role, part of the ABC transporter complex GltIJKL involved in glutamate and aspartate uptake. Probably responsible for the translocation of the substrate across the membrane. The chain is Glutamate/aspartate import permease protein GltJ (gltJ) from Escherichia coli O6:H1 (strain CFT073 / ATCC 700928 / UPEC).